Here is a 416-residue protein sequence, read N- to C-terminus: 46 kDa surface antigen (416 aa).

Residues 1 to 27 form the signal peptide; it reads MLRKKFLYSSAIYATSLASIIAFVAAG. The N-palmitoyl cysteine moiety is linked to residue cysteine 28. Cysteine 28 is lipidated: S-diacylglycerol cysteine.

Its subcellular location is the cell membrane. The protein is 46 kDa surface antigen (p46) of Mesomycoplasma hyopneumoniae (strain 232) (Mycoplasma hyopneumoniae).